A 273-amino-acid polypeptide reads, in one-letter code: F-actin-capping protein subunit alpha (273 aa).

It belongs to the F-actin-capping protein alpha subunit family. As to quaternary structure, heterodimer of an alpha and a beta subunit.

The protein resides in the cytoplasm. Its subcellular location is the cytoskeleton. F-actin-capping proteins bind in a Ca(2+)-independent manner to the fast growing ends of actin filaments (barbed end) thereby blocking the exchange of subunits at these ends. Unlike other capping proteins (such as gelsolin and severin), these proteins do not sever actin filaments. In Emericella nidulans (strain FGSC A4 / ATCC 38163 / CBS 112.46 / NRRL 194 / M139) (Aspergillus nidulans), this protein is F-actin-capping protein subunit alpha (cap1).